The sequence spans 246 residues: Putative carbonic anhydrase 3 (246 aa).

Residues 3–244 form the Alpha-carbonic anhydrase domain; sequence GHWSYCDDDE…LNDRKIVHIV (242 aa). Residue His61 is the Proton acceptor of the active site. Residues His91, His93, and His116 each contribute to the Zn(2+) site. Substrate is bound at residue 187-188; sequence TT.

This sequence belongs to the alpha-carbonic anhydrase family. Zn(2+) is required as a cofactor.

It catalyses the reaction hydrogencarbonate + H(+) = CO2 + H2O. In terms of biological role, reversible hydration of carbon dioxide. This is Putative carbonic anhydrase 3 (cah-3) from Caenorhabditis elegans.